The sequence spans 204 residues: dITP/XTP pyrophosphatase (204 aa).

14-19 (THNKGK) is a binding site for substrate. Residues E46 and D75 each contribute to the Mg(2+) site. The Proton acceptor role is filled by D75. Residues S76, 161–164 (FGYD), K184, and 189–190 (HR) contribute to the substrate site.

This sequence belongs to the HAM1 NTPase family. In terms of assembly, homodimer. Requires Mg(2+) as cofactor.

The catalysed reaction is XTP + H2O = XMP + diphosphate + H(+). It carries out the reaction dITP + H2O = dIMP + diphosphate + H(+). The enzyme catalyses ITP + H2O = IMP + diphosphate + H(+). In terms of biological role, pyrophosphatase that catalyzes the hydrolysis of nucleoside triphosphates to their monophosphate derivatives, with a high preference for the non-canonical purine nucleotides XTP (xanthosine triphosphate), dITP (deoxyinosine triphosphate) and ITP. Seems to function as a house-cleaning enzyme that removes non-canonical purine nucleotides from the nucleotide pool, thus preventing their incorporation into DNA/RNA and avoiding chromosomal lesions. The chain is dITP/XTP pyrophosphatase from Ruegeria pomeroyi (strain ATCC 700808 / DSM 15171 / DSS-3) (Silicibacter pomeroyi).